The chain runs to 309 residues: Homoserine kinase (309 aa).

95-105 provides a ligand contact to ATP; the sequence is PHGRGLGSSSA.

It belongs to the GHMP kinase family. Homoserine kinase subfamily.

It localises to the cytoplasm. The enzyme catalyses L-homoserine + ATP = O-phospho-L-homoserine + ADP + H(+). It functions in the pathway amino-acid biosynthesis; L-threonine biosynthesis; L-threonine from L-aspartate: step 4/5. Catalyzes the ATP-dependent phosphorylation of L-homoserine to L-homoserine phosphate. This Streptomyces coelicolor (strain ATCC BAA-471 / A3(2) / M145) protein is Homoserine kinase.